Reading from the N-terminus, the 267-residue chain is Sepiapterin reductase (267 aa).

N-acetylmethionine is present on M1. Position 20–26 (20–26) interacts with NADP(+); sequence GASRGFG. S38 bears the Phosphoserine mark. Residues 48–49 and 75–76 each bind NADP(+); these read RN and DL. Substrate-binding positions include 163–164 and Y176; that span reads SI. Residue K180 coordinates NADP(+). Residue S201 is modified to Phosphoserine. G205 contributes to the substrate binding site. 207-212 serves as a coordination point for NADP(+); the sequence is LDTDMQ. S219 bears the Phosphoserine mark. Residue D263 participates in substrate binding.

The protein belongs to the sepiapterin reductase family. As to quaternary structure, homodimer.

The protein resides in the cytoplasm. The catalysed reaction is L-erythro-7,8-dihydrobiopterin + NADP(+) = L-sepiapterin + NADPH + H(+). It catalyses the reaction (6R)-L-erythro-5,6,7,8-tetrahydrobiopterin + 2 NADP(+) = 6-pyruvoyl-5,6,7,8-tetrahydropterin + 2 NADPH + 2 H(+). Functionally, catalyzes the final one or two reductions in tetra-hydrobiopterin biosynthesis to form 5,6,7,8-tetrahydrobiopterin. The polypeptide is Sepiapterin reductase (SPR) (Bos taurus (Bovine)).